Consider the following 174-residue polypeptide: Peptide deformylase (174 aa).

Fe cation-binding residues include C96 and H138. E139 is a catalytic residue. Position 142 (H142) interacts with Fe cation.

This sequence belongs to the polypeptide deformylase family. It depends on Fe(2+) as a cofactor.

The enzyme catalyses N-terminal N-formyl-L-methionyl-[peptide] + H2O = N-terminal L-methionyl-[peptide] + formate. Removes the formyl group from the N-terminal Met of newly synthesized proteins. Requires at least a dipeptide for an efficient rate of reaction. N-terminal L-methionine is a prerequisite for activity but the enzyme has broad specificity at other positions. This Nautilia profundicola (strain ATCC BAA-1463 / DSM 18972 / AmH) protein is Peptide deformylase.